Reading from the N-terminus, the 64-residue chain is Large ribosomal subunit protein bL35 (64 aa).

The protein belongs to the bacterial ribosomal protein bL35 family.

This chain is Large ribosomal subunit protein bL35, found in Coxiella burnetii (strain RSA 331 / Henzerling II).